The following is a 111-amino-acid chain: UPF0145 protein BTH_I2656 (111 aa).

It belongs to the UPF0145 family.

This chain is UPF0145 protein BTH_I2656, found in Burkholderia thailandensis (strain ATCC 700388 / DSM 13276 / CCUG 48851 / CIP 106301 / E264).